We begin with the raw amino-acid sequence, 186 residues long: Coiled-coil domain-containing protein ORF13 (186 aa).

2 coiled-coil regions span residues 2–30 (GIKEKEIELETLKREIAQAEASLEQDFIK) and 63–85 (LREKLTDKVSKAMDLSDEIQRDK).

This is Coiled-coil domain-containing protein ORF13 from Helicobacter pylori (strain 35A).